The sequence spans 85 residues: Large ribosomal subunit protein bL27 (85 aa).

The interval 1-24 (MAHKKGVGSSRNGRDSDGQRLGCK) is disordered.

The protein belongs to the bacterial ribosomal protein bL27 family.

This Geotalea daltonii (strain DSM 22248 / JCM 15807 / FRC-32) (Geobacter daltonii) protein is Large ribosomal subunit protein bL27.